A 129-amino-acid polypeptide reads, in one-letter code: D-ribose pyranase (129 aa).

The active-site Proton donor is His-20. Substrate-binding positions include Asp-28, His-96, and 118 to 120 (YAN).

Belongs to the RbsD / FucU family. RbsD subfamily. As to quaternary structure, homodecamer.

The protein localises to the cytoplasm. The catalysed reaction is beta-D-ribopyranose = beta-D-ribofuranose. Its pathway is carbohydrate metabolism; D-ribose degradation; D-ribose 5-phosphate from beta-D-ribopyranose: step 1/2. Catalyzes the interconversion of beta-pyran and beta-furan forms of D-ribose. In Halalkalibacterium halodurans (strain ATCC BAA-125 / DSM 18197 / FERM 7344 / JCM 9153 / C-125) (Bacillus halodurans), this protein is D-ribose pyranase.